A 1259-amino-acid chain; its full sequence is Telomerase reverse transcriptase (1259 aa).

The Reverse transcriptase domain maps to 742-1067 (RGEPRKAVRH…SFMPWSGLLI (326 aa)). The Mg(2+) site is built by D837, D999, and D1000.

It belongs to the reverse transcriptase family. Telomerase subfamily. In terms of assembly, component of the telomerase ribonucleoprotein complex. In terms of tissue distribution, expressed in shoot apices and immature embryos.

Its subcellular location is the nucleus. The protein resides in the chromosome. It localises to the telomere. It carries out the reaction DNA(n) + a 2'-deoxyribonucleoside 5'-triphosphate = DNA(n+1) + diphosphate. Its function is as follows. Telomerase is a ribonucleoprotein enzyme essential for the replication of chromosome termini in most eukaryotes. It elongates telomeres. It is a reverse transcriptase that adds simple sequence repeats to chromosome ends by copying a template sequence within the RNA component of the enzyme. The chain is Telomerase reverse transcriptase (TERT) from Oryza sativa subsp. japonica (Rice).